The sequence spans 95 residues: Large ribosomal subunit protein uL23 (95 aa).

It belongs to the universal ribosomal protein uL23 family. Part of the 50S ribosomal subunit. Contacts protein L29, and trigger factor when it is bound to the ribosome.

Functionally, one of the early assembly proteins it binds 23S rRNA. One of the proteins that surrounds the polypeptide exit tunnel on the outside of the ribosome. Forms the main docking site for trigger factor binding to the ribosome. In Desulfitobacterium hafniense (strain DSM 10664 / DCB-2), this protein is Large ribosomal subunit protein uL23.